We begin with the raw amino-acid sequence, 562 residues long: Furostanol glycoside 26-O-beta-glucosidase (562 aa).

The N-terminal 44 residues, 1–44 (MAAQLGLPLVSCHRGASQAASSSAHLVPGASAIMQAGNRRQKMR), are a transit peptide targeting the chloroplast. Residues Gln110, His214, and 259-260 (NE) each bind a beta-D-glucoside. Residue Glu260 is the Proton donor of the active site. Residues Cys279 and Cys285 are joined by a disulfide bond. A beta-D-glucoside contacts are provided by residues Tyr401, Glu472, Trp518, 525-526 (EW), and Phe534. Glu472 (nucleophile) is an active-site residue.

It belongs to the glycosyl hydrolase 1 family. As to quaternary structure, heterodimer. The N-terminus of the larger subunit is blocked and the smaller subunit might be derived from the larger one.

The protein localises to the plastid. It is found in the chloroplast. It catalyses the reaction protodioscin + H2O = 26-deglucoprotodioscin + D-glucose. With respect to regulation, partially inhibited by glucono-1,5-lactone, conduritol beta-epoxide and diosgenin, but not by beta-sitosterol or cholesterol. Beta-glucosidase involved in saponin metabolism. Highly specific for the cleavage of C-26-bound glucose moiety of furostanol glycosides such as protogracillin and protodioscin. No activity with nuatigenin glycoside. Convers furostanol glycosides to spirostanol glycosides. This Hellenia speciosa (Crepe ginger) protein is Furostanol glycoside 26-O-beta-glucosidase.